Consider the following 209-residue polypeptide: MSKVHVFDHPLIQHKLSYIRDARTGTKEFRELVDEVGMLMAYEVTRDLELQDVEIQTPVTKMTAKRLAGKKLAIVPILRAGLGMTDGVLSLVPAARVGHIGLYRDPETLEAVEYFAKMPQDIDERQIIVVDPMLATGASAIEAISSLKKRGAKSIRFMCLIAAPEGVEKMQEAHPDVDIYIAALDEKLNDKAYITPGLGDAGDRLFGTK.

Residues Arg79, Arg104, and 131 to 139 (DPMLATGAS) each bind 5-phospho-alpha-D-ribose 1-diphosphate. Uracil is bound by residues Ile194 and 199–201 (GDA). Position 200 (Asp200) interacts with 5-phospho-alpha-D-ribose 1-diphosphate.

The protein belongs to the UPRTase family. The cofactor is Mg(2+).

The catalysed reaction is UMP + diphosphate = 5-phospho-alpha-D-ribose 1-diphosphate + uracil. It participates in pyrimidine metabolism; UMP biosynthesis via salvage pathway; UMP from uracil: step 1/1. With respect to regulation, allosterically activated by GTP. Functionally, catalyzes the conversion of uracil and 5-phospho-alpha-D-ribose 1-diphosphate (PRPP) to UMP and diphosphate. This Staphylococcus epidermidis (strain ATCC 35984 / DSM 28319 / BCRC 17069 / CCUG 31568 / BM 3577 / RP62A) protein is Uracil phosphoribosyltransferase.